We begin with the raw amino-acid sequence, 417 residues long: Protein-lysine 6-oxidase (417 aa).

A signal peptide spans 1–21 (MRFAWTVLLLGPLQLCALVHC). The propeptide at 22 to 168 (APPAAGQQQP…PPSRVDGMVG (147 aa)) is removed by BMP1. The disordered stretch occupies residues 64-89 (YQPQRRRDPGAAVPGAANASAQQPRT). Over residues 73–84 (GAAVPGAANASA) the composition is skewed to low complexity. Residues Asn81, Asn97, and Asn144 are each glycosylated (N-linked (GlcNAc...) asparagine). The tract at residues 137-174 (AGASRAENQTAPGEVPALSNLRPPSRVDGMVGDDPYNP) is disordered. Tyr187 carries the sulfotyrosine modification. Positions 213–417 (PDLVADPYYI…YASGCTISPY (205 aa)) are lysyl-oxidase like. Cystine bridges form between Cys238–Cys244, Cys291–Cys340, Cys324–Cys330, Cys351–Cys361, and Cys398–Cys412. Residues His292, His294, and His296 each contribute to the Cu cation site. Residues 320 to 355 (KASFCLEDTSCDYGYHRRFACTAHTQGLSPGCYDTY) constitute a cross-link (lysine tyrosylquinone (Lys-Tyr)). At Tyr355 the chain carries 2',4',5'-topaquinone.

The protein belongs to the lysyl oxidase family. In terms of assembly, interacts with MFAP4. Interacts (via propeptide) with EFEMP2; this interaction is strong and facilitates formation of ternary complexes with ELN during elastic fiber assembly; this interaction limits interaction of EFEMP2 with FBLN5. Requires Cu cation as cofactor. Lysine tyrosylquinone residue serves as cofactor. Post-translationally, the lysine tyrosylquinone cross-link (LTQ) is generated by condensation of the epsilon-amino group of a lysine with a topaquinone produced by oxidation of tyrosine. In terms of processing, proteolytically cleaved by BMP1 which removes the propeptide. Also proteolytically cleaved by ADAMTS2 and ADAMTS14, but not by ADAMTS3, at an additional cleavage site downstream of the BMP1 cleavage site. The propeptide plays a role in directing the deposition of this enzyme to elastic fibers, via interaction with tropoelastin. Cleavage by BMP1 to remove the propeptide does not increase enzymatic activity but increases binding to collagen. Cleavage by ADAMTS2 produces a form with reduced collagen-binding activity. Sulfated at Tyr-187 and also at either Tyr-183 or Tyr-184 which enhances binding to collagen. In terms of tissue distribution, heart, placenta, skeletal muscle, kidney, lung and pancreas.

The protein localises to the secreted. It localises to the extracellular space. The enzyme catalyses L-lysyl-[protein] + O2 + H2O = (S)-2-amino-6-oxohexanoyl-[protein] + H2O2 + NH4(+). Its function is as follows. Responsible for the post-translational oxidative deamination of peptidyl lysine residues in precursors to fibrous collagen and elastin. Regulator of Ras expression. May play a role in tumor suppression. Plays a role in the aortic wall architecture. The polypeptide is Protein-lysine 6-oxidase (LOX) (Homo sapiens (Human)).